Here is a 250-residue protein sequence, read N- to C-terminus: 2,3-bisphosphoglycerate-dependent phosphoglycerate mutase (250 aa).

Substrate is bound by residues 8–15, 21–22, arginine 60, 87–90, lysine 98, 114–115, and 183–184; these read RHGESQWN, TG, ERHY, RR, and GN. The Tele-phosphohistidine intermediate role is filled by histidine 9. Glutamate 87 acts as the Proton donor/acceptor in catalysis.

Belongs to the phosphoglycerate mutase family. BPG-dependent PGAM subfamily. In terms of assembly, homodimer.

The catalysed reaction is (2R)-2-phosphoglycerate = (2R)-3-phosphoglycerate. Its pathway is carbohydrate degradation; glycolysis; pyruvate from D-glyceraldehyde 3-phosphate: step 3/5. In terms of biological role, catalyzes the interconversion of 2-phosphoglycerate and 3-phosphoglycerate. The polypeptide is 2,3-bisphosphoglycerate-dependent phosphoglycerate mutase (Bordetella petrii (strain ATCC BAA-461 / DSM 12804 / CCUG 43448)).